An 83-amino-acid polypeptide reads, in one-letter code: Protein L83L (83 aa).

Belongs to the asfivirus L83L family. Interacts with host IL1B.

The protein resides in the host cytoplasm. Functionally, may subvert the host innate immune response by interacting with host IL1B and interfering with its function. The chain is Protein L83L from Ornithodoros (relapsing fever ticks).